The following is a 431-amino-acid chain: Citrate synthase (431 aa).

Catalysis depends on residues His-306 and Asp-364.

The protein belongs to the citrate synthase family.

The catalysed reaction is oxaloacetate + acetyl-CoA + H2O = citrate + CoA + H(+). The protein operates within carbohydrate metabolism; tricarboxylic acid cycle; isocitrate from oxaloacetate: step 1/2. The chain is Citrate synthase (gltA) from Bartonella henselae (strain ATCC 49882 / DSM 28221 / CCUG 30454 / Houston 1) (Rochalimaea henselae).